We begin with the raw amino-acid sequence, 735 residues long: Cyclic nucleotide-gated channel cone photoreceptor subunit alpha (735 aa).

The Cytoplasmic segment spans residues 1-214 (MAKINTQHSY…PSSNMYYNWL (214 aa)). The tract at residues 142 to 191 (VNFSNNTNEDKKEEKKEVKEEKKEEKKEEKKEEKKDDKKDDKKDDKKDDK) is disordered. Residues 149-191 (NEDKKEEKKEVKEEKKEEKKEEKKEEKKDDKKDDKKDDKKDDK) are compositionally biased toward basic and acidic residues. The chain crosses the membrane as a helical span at residues 215–236 (TIIAAPVFYNWCMLICRACFDE). The Extracellular segment spans residues 237-246 (LQIDHIKLWL). A helical transmembrane segment spans residues 247-267 (FLDYCSDIIYVFDMFVRFRTG). Over 268–292 (FLEQGLLVKDEKKLRDHYTQTVQFK) the chain is Cytoplasmic. A helical transmembrane segment spans residues 293-311 (LDVLSLLPTDLAYLKLGLN). The Extracellular portion of the chain corresponds to 312–316 (YPELR). Residues 317-335 (FNRLLRIARLFEFFDRTET) form a helical membrane-spanning segment. The Cytoplasmic portion of the chain corresponds to 336–342 (RTNYPNM). The helical transmembrane segment at 343-366 (FRIGNLVLYILIIIHWNACIYFAI) threads the bilayer. The Extracellular segment spans residues 367 to 389 (SKVIGFGTDSWVYPNVSIPEYGR). 2 helical membrane-spanning segments follow: residues 390–424 (LSRK…LFVV) and 425–449 (IDFL…SNMN). Topologically, residues 450–735 (ASRAEFQAKV…PEKPEEQKKD (286 aa)) are cytoplasmic. Residues 532 to 654 (LLIE…DNLI), glutamate 591, and arginine 606 each bind 3',5'-cyclic GMP. Positions 715–735 (GSGSLSVGEPEPEKPEEQKKD) are disordered. Positions 725 to 735 (EPEKPEEQKKD) are enriched in basic and acidic residues.

This sequence belongs to the cyclic nucleotide-gated cation channel (TC 1.A.1.5) family.

It localises to the membrane. Its function is as follows. Visual signal transduction is mediated by a G-protein coupled cascade using cGMP as second messenger. This protein can be activated by cyclic GMP which leads to an opening of the cation channel and thereby causing a depolarization of cone photoreceptors. In Gallus gallus (Chicken), this protein is Cyclic nucleotide-gated channel cone photoreceptor subunit alpha.